Here is a 716-residue protein sequence, read N- to C-terminus: Translation initiation factor IF-2 (716 aa).

The segment at 53–135 is disordered; that stretch reads GGAGVTSQKP…PLKPKKELPE (83 aa). Over residues 57–83 the composition is skewed to polar residues; the sequence is VTSQKPAETNKNKPQGINQQPAGNQPN. Over residues 93–109 the composition is skewed to low complexity; sequence VQNNQFNKNKKNNNNNK. One can recognise a tr-type G domain in the interval 217 to 386; it reads IRPPVVTIMG…LLVSEVEELK (170 aa). Positions 226 to 233 are G1; that stretch reads GHVDHGKT. 226–233 contacts GTP; the sequence is GHVDHGKT. Residues 251–255 are G2; that stretch reads GITQH. The tract at residues 272 to 275 is G3; it reads DTPG. Residues 272-276 and 326-329 each bind GTP; these read DTPGH and NKVD. The tract at residues 326–329 is G4; sequence NKVD. The G5 stretch occupies residues 362-364; the sequence is SAL.

The protein belongs to the TRAFAC class translation factor GTPase superfamily. Classic translation factor GTPase family. IF-2 subfamily.

The protein localises to the cytoplasm. In terms of biological role, one of the essential components for the initiation of protein synthesis. Protects formylmethionyl-tRNA from spontaneous hydrolysis and promotes its binding to the 30S ribosomal subunits. Also involved in the hydrolysis of GTP during the formation of the 70S ribosomal complex. The protein is Translation initiation factor IF-2 of Bacillus velezensis (strain DSM 23117 / BGSC 10A6 / LMG 26770 / FZB42) (Bacillus amyloliquefaciens subsp. plantarum).